A 422-amino-acid chain; its full sequence is Probable FBD-associated F-box protein At1g32375 (422 aa).

An F-box domain is found at 1-53; that stretch reads MDKLSQLPEALLVRILSLLSAKDVVSTMVLSKRWQFLWMLVPKLIYDDSYQAI. The FBD domain occupies 342-392; it reads CWNEPSAVPECLLTSLETLEWVKYEGTEEEKEVAAFILRSGSCLKKVTISS.

The chain is Probable FBD-associated F-box protein At1g32375 from Arabidopsis thaliana (Mouse-ear cress).